Here is a 394-residue protein sequence, read N- to C-terminus: uncharacterized protein (394 aa).

The protein belongs to the mycobacterial PPE family.

This is an uncharacterized protein from Mycobacterium tuberculosis (strain CDC 1551 / Oshkosh).